A 1066-amino-acid chain; its full sequence is UPF0182 protein BL1029 (1066 aa).

The disordered stretch occupies residues 12–74; the sequence is GNGGDSRRNN…KPASGGSGGS (63 aa). Positions 44–61 are enriched in low complexity; the sequence is NAGPSGSSRPPRGPANPR. 7 consecutive transmembrane segments (helical) span residues 77–97, 126–146, 179–199, 235–255, 282–302, 326–346, and 372–392; these read SKILIGVVLALAIIVGLFFGL, LWVAYALLMALTGFVSAWLAI, VAVVISLIVGVIFGSQFNANW, VLAAVAMLLGVGLVFSVVTHV, LGIWLMLNMFAWAVRQMIGVF, VTFIMAALTAILGVVLGIWLM, and VTSIAVVVVVGLVLTVAWPVL. Positions 977–1044 are disordered; the sequence is DSGAAAGDAE…SQSAMKNGDW (68 aa). Positions 989 to 998 are enriched in polar residues; sequence SGDQSGSDTN. A compositionally biased stretch (low complexity) spans 1003-1016; sequence GTTDGKSDSGSSSD.

It belongs to the UPF0182 family.

It localises to the cell membrane. The sequence is that of UPF0182 protein BL1029 from Bifidobacterium longum (strain NCC 2705).